Consider the following 1823-residue polypeptide: WD repeat-containing protein DDB_G0292056 (1823 aa).

A disordered region spans residues 1-68 (MTYNNNNNYL…IGNSSGGGGV (68 aa)). Positions 16-61 (TSTSTSTSTSTPTSTKTSPLNTSSSSNILKSNSRNPSPNNPTNIGN) are enriched in low complexity. WD repeat units lie at residues 138-177 (QSKWEVGVVDWNSQSPNLVASSSNQDTFIWDIENPKYPLL), 182-222 (SHQR…KAVK), 228-267 (SHILGAIQVKWNRFNSNVLASAHESYLMIWDIRKDSQELN), 270-310 (VHSA…PKST), 312-354 (ITSN…YSTP), and 360-405 (GHTD…KDLF). Disordered stretches follow at residues 418-461 (PTTT…LLST), 530-562 (QPDDDNNNNNLNNLNNNNNTQDNIDNNDDNNNN), 649-687 (NITETNNNNNNHNNSVQNNNNNNNNNNNNNNNSGGGFLK), 714-778 (IDIS…YRPG), 805-840 (ILTNLNNNSNNNSGSGGGGSSNMNASITTSTTTNDQ), 883-940 (IPNN…SSTS), 966-996 (SSSSSISDTTNNTSNTTQNIQNTTKNINPPR), 1014-1058 (NNIT…NDNP), and 1122-1186 (QQLV…NGKS). 2 stretches are compositionally biased toward low complexity: residues 419 to 432 (TTTTTTTTATTTTT) and 440 to 461 (LNESTDNNNNTNSLNSSTLLST). Low complexity-rich tracts occupy residues 654–680 (NNNNNNHNNSVQNNNNNNNNNNNNNNN) and 717–748 (SQQQQQQQQQQAATTSTSSSSSSSSNTQQQQQ). Polar residues-rich tracts occupy residues 749 to 768 (FLTATVSNKGGTVLSKSPTS) and 827 to 840 (MNASITTSTTTNDQ). Low complexity-rich tracts occupy residues 885–926 (NNNK…SSNN), 966–993 (SSSSSISDTTNNTSNTTQNIQNTTKNIN), 1014–1041 (NNITGNNNINSNSNTTNNLTSPNPNRLN), and 1127–1183 (SSSP…NNGN). The WD 7 repeat unit spans residues 1207–1250 (ANSYILSGKPVEEICKYNSELAEKENRKDLVKLWNTLGMITDSK). Disordered stretches follow at residues 1264–1307 (SHFG…LHQS), 1697–1725 (QQQPQHYQQHRHSMSGTSHYHQQQPHTHN), and 1764–1823 (PQQE…MFSN). Positions 1282 to 1293 (STGIASSTGSNS) are enriched in low complexity. The segment covering 1710–1725 (MSGTSHYHQQQPHTHN) has biased composition (polar residues).

This chain is WD repeat-containing protein DDB_G0292056, found in Dictyostelium discoideum (Social amoeba).